A 270-amino-acid polypeptide reads, in one-letter code: Beta carbonic anhydrase 1 (270 aa).

The Zn(2+) site is built by C39, D41, H105, and C108.

Belongs to the beta-class carbonic anhydrase family. As to quaternary structure, oligomer. The cofactor is Zn(2+).

The enzyme catalyses hydrogencarbonate + H(+) = CO2 + H2O. Reversible hydration of carbon dioxide. The sequence is that of Beta carbonic anhydrase 1 (bca-1) from Caenorhabditis elegans.